Here is a 184-residue protein sequence, read N- to C-terminus: Large ribosomal subunit protein uL6 (184 aa).

The protein belongs to the universal ribosomal protein uL6 family. Part of the 50S ribosomal subunit.

Functionally, this protein binds to the 23S rRNA, and is important in its secondary structure. It is located near the subunit interface in the base of the L7/L12 stalk, and near the tRNA binding site of the peptidyltransferase center. This chain is Large ribosomal subunit protein uL6, found in Amoebophilus asiaticus (strain 5a2).